The following is a 434-amino-acid chain: Adenylosuccinate synthetase (434 aa).

Residues 22-28 (GDEGKGK) and 50-52 (GHT) contribute to the GTP site. Asp23 acts as the Proton acceptor in catalysis. Mg(2+) is bound by residues Asp23 and Gly50. IMP is bound by residues 23-26 (DEGK), 48-51 (NAGH), Thr139, Arg153, Gln234, Thr249, and Arg313. Catalysis depends on His51, which acts as the Proton donor. 309–315 (ATTGRKR) contacts substrate. GTP contacts are provided by residues Arg315, 341 to 343 (KLD), and 423 to 425 (SVG).

It belongs to the adenylosuccinate synthetase family. Homodimer. Mg(2+) is required as a cofactor.

The protein localises to the cytoplasm. It catalyses the reaction IMP + L-aspartate + GTP = N(6)-(1,2-dicarboxyethyl)-AMP + GDP + phosphate + 2 H(+). It functions in the pathway purine metabolism; AMP biosynthesis via de novo pathway; AMP from IMP: step 1/2. In terms of biological role, plays an important role in the de novo pathway of purine nucleotide biosynthesis. Catalyzes the first committed step in the biosynthesis of AMP from IMP. The chain is Adenylosuccinate synthetase from Pelodictyon phaeoclathratiforme (strain DSM 5477 / BU-1).